A 170-amino-acid chain; its full sequence is Capsid protein (170 aa).

Positions 1 to 19 are enriched in basic residues; sequence MAQLRWGRKGVRSQRRKYS. The disordered stretch occupies residues 1–25; that stretch reads MAQLRWGRKGVRSQRRKYSRPVAYK.

Belongs to the nanoviridae capsid protein family.

Its subcellular location is the virion. The protein is Capsid protein (DNA-S) of Subterranean clover stunt virus (strain J) (SCSV).